The sequence spans 176 residues: uncharacterized protein (176 aa).

Residues 1–20 (MIKKISIILITLFIIQLTKS) form the signal peptide. The disordered stretch occupies residues 26–46 (NNNNNNNNNNNNNNNNNNNNN). N-linked (GlcNAc...) asparagine glycosylation is present at asparagine 120.

This sequence belongs to the Dictyostelium gerABC family.

Its subcellular location is the secreted. This is an uncharacterized protein from Dictyostelium discoideum (Social amoeba).